Here is a 200-residue protein sequence, read N- to C-terminus: WASH complex subunit 3 (200 aa).

The stretch at 56–76 forms a coiled coil; the sequence is SLRIQQIETTLSILEAKLASI. 2 disordered regions span residues 87–130 and 165–200; these read VRAP…AENI and DPNL…SFSD.

The protein belongs to the CCDC53 family. In terms of assembly, component of the WASH complex.

The sequence is that of WASH complex subunit 3 from Danio rerio (Zebrafish).